The sequence spans 57 residues: Small ribosomal subunit protein bS21 (57 aa).

This sequence belongs to the bacterial ribosomal protein bS21 family.

The protein is Small ribosomal subunit protein bS21 of Bacillus anthracis (strain A0248).